Consider the following 325-residue polypeptide: Lipid droplet-associated hydrolase (325 aa).

Residue S139 is the Nucleophile of the active site. Residues D271 and H300 each act as charge relay system in the active site.

This sequence belongs to the AB hydrolase superfamily. LDAH family. As to expression, present in macrophage-rich areas in atherosclerotic lesions (at protein level). Expressed in monocytes and monocyte-derived macrophages (at protein level).

It is found in the lipid droplet. Its subcellular location is the endoplasmic reticulum. It carries out the reaction a cholesterol ester + H2O = cholesterol + a fatty acid + H(+). Its function is as follows. Probable serine lipid hydrolase associated with lipid droplets. Has low cholesterol esterase activity. Appears to lack triglyceride lipase activity. Involved in cholesterol and triglyceride homeostasis; has opposing effects, stimulating cellular triglyceride accumulation and cellular cholesterol release. Acts antagonistically with PNPLA2/ATGL in regulation of cellular lipid stores. May regulate triglyceride accumulation indirectly through stimulation of PNPLA2/ATGL ubiquitination and proteasomal degradation. Promotes microtubule-dependent lipid droplet fusion. Highly expressed in macrophage-rich areas in atherosclerotic lesions, suggesting that it could promote cholesterol ester turnover in macrophages. This chain is Lipid droplet-associated hydrolase, found in Homo sapiens (Human).